The primary structure comprises 203 residues: MIRLFTFAIITVFLIVISRLALQRAYKYIKLNKKINNTESKTRLSIRLVSTVPYYLPLFEGLQNFGQYVLPDYPVAAIPLYKKIILPMLIFYMNHAILGLVTFFALYYVLVRNKSPIPVHQLVRFNSMQSILLFLVGSLFGAVFRAFPIEFRISFLGLMVCNMMFWFVLSTITYSIVKAVQGKYSNIPVISEAVRIQISGYST.

The next 5 helical transmembrane spans lie at 2–22 (IRLF…RLAL), 51–71 (TVPY…YVLP), 84–104 (IILP…VTFF), 131–151 (ILLF…PIEF), and 153–173 (ISFL…STIT).

It belongs to the Tic20 family.

It is found in the plastid. Its subcellular location is the chloroplast membrane. This Pyropia yezoensis (Susabi-nori) protein is Tic20 family protein Ycf60 (ycf60).